The following is a 157-amino-acid chain: Endoribonuclease YbeY (157 aa).

His-114, His-118, and His-124 together coordinate Zn(2+).

The protein belongs to the endoribonuclease YbeY family. Zn(2+) serves as cofactor.

It is found in the cytoplasm. Single strand-specific metallo-endoribonuclease involved in late-stage 70S ribosome quality control and in maturation of the 3' terminus of the 16S rRNA. This is Endoribonuclease YbeY from Serratia proteamaculans (strain 568).